The primary structure comprises 114 residues: PDZK1-interacting protein 1 (114 aa).

Over 1 to 28 (MSALSLVILGLLMAVPPASCQQGLGNLQ) the chain is Extracellular. Residues 29–51 (PWMQGLIAVAVFLVLVAIAFAIN) form a helical membrane-spanning segment. Topologically, residues 52–114 (HFWCQEEREP…EEGRVHSTPM (63 aa)) are cytoplasmic. The residue at position 85 (serine 85) is a Phosphoserine. Positions 92-114 (SNEHENAYENTSEEEGRVHSTPM) are disordered. A compositionally biased stretch (basic and acidic residues) spans 105 to 114 (EEGRVHSTPM).

It belongs to the PDZK1-interacting protein 1/SMIM24 family. As to quaternary structure, forms a heterodimer (via N-terminal transmembrane helix) with SLC5A2/SGLT2 (via TM13); this interaction enhances SLC5A2 transporter activity. Interacts with PDZK1.

It is found in the apical cell membrane. Auxiliary protein of electrogenic Na(+)-coupled sugar symporter SLC5A2/SGLT2 and SLC5A1/SGLT1. Essential for the transporter activity of SLC5A2/SGLT2 but not SLC5A1/SGLT1. The chain is PDZK1-interacting protein 1 from Sus scrofa (Pig).